The following is a 45-amino-acid chain: Large ribosomal subunit protein bL36 (45 aa).

A disordered region spans residues 1–45 (MKVSSSIKADPSKGDKLVRRKGRLYVINKKDPNRKQRQAGPARKK).

The protein belongs to the bacterial ribosomal protein bL36 family.

The chain is Large ribosomal subunit protein bL36 from Chlamydia caviae (strain ATCC VR-813 / DSM 19441 / 03DC25 / GPIC) (Chlamydophila caviae).